A 437-amino-acid polypeptide reads, in one-letter code: Glutamate-1-semialdehyde 2,1-aminomutase (437 aa).

Residue K274 is modified to N6-(pyridoxal phosphate)lysine.

It belongs to the class-III pyridoxal-phosphate-dependent aminotransferase family. HemL subfamily. In terms of assembly, homodimer. Pyridoxal 5'-phosphate serves as cofactor.

Its subcellular location is the cytoplasm. It catalyses the reaction (S)-4-amino-5-oxopentanoate = 5-aminolevulinate. It functions in the pathway porphyrin-containing compound metabolism; protoporphyrin-IX biosynthesis; 5-aminolevulinate from L-glutamyl-tRNA(Glu): step 2/2. In Paracidovorax citrulli (strain AAC00-1) (Acidovorax citrulli), this protein is Glutamate-1-semialdehyde 2,1-aminomutase.